The sequence spans 414 residues: uncharacterized protein (414 aa).

Disordered regions lie at residues 136 to 168 (SSKSMAPTAEKELEKPLENGSELQEGDSLTVPT), 298 to 322 (KNFPDSGMRRAVQTPSPQNKMSYHR), and 350 to 382 (PPHSRPMHGSYNKVHVNKEPKPNLSPDKYMSTS).

This is an uncharacterized protein from Macaca fascicularis (Crab-eating macaque).